Reading from the N-terminus, the 522-residue chain is Serine/threonine protein phosphatase 2A 59 kDa regulatory subunit B' gamma isoform (522 aa).

The disordered stretch occupies residues 1–74 (MIKQIFGKLP…SSTSSNRTNQ (74 aa)). Low complexity predominate over residues 35-58 (PNSGISSISKPSSKSSASNSNGAN). Polar residues predominate over residues 63–74 (APSSTSSNRTNQ).

The protein belongs to the phosphatase 2A regulatory subunit B56 family. As to quaternary structure, PP2A consists of a common heteromeric enzyme, composed of a catalytic subunit (subunits C), a constant regulatory subunit (subunit A), and a variety of regulatory subunits such as subunits B (the R2/B/PR55/B55, R3/B''/PR72/PR130/PR59 and R5/B'/B56 families). Interacts with BRI1. Interacts with IGMT1 and IGMT4. Interacts with ACO3 in the cytosol. In terms of tissue distribution, expressed ubiquitously at low levels. Expressed in roots, emerging lateral roots, cotyledons, leaves, floral stalks and flowers.

The protein resides in the cytoplasm. It localises to the cytosol. It is found in the nucleus. Its function is as follows. The B regulatory subunit may modulate substrate selectivity and catalytic activity, and may also direct the localization of the catalytic enzyme to a particular subcellular compartment. Required for the formation of the PP2A holoenzyme that negatively regulates brassinosteroid signaling by dephosphorylating and inactivating BRI1 in the cytoplasm. Seems to be functionally connected with CPR5 and may mediate the negative regulation of defense reactions and senescence under low irradiances. May contribute to the epigenetic regulation of defense gene expression. Involved in the control of methoxylation of indole glucosinolates and formation of 4-methoxy- indol-3-yl-methyl glucosinolate in leaves, through direct interaction with indole glucosinolate methyltransferases. Involved in growth regulation and stress signaling. Involved in the regulation of reactive oxygen species (ROS) signaling and maintenance of cellular ROS homeostasis. Required to control the level of ACO3 phosphorylation in the cytoplasm. Regulates hydrogen peroxide metabolism by controlling the abundance of AOX1A and AXO3/AOX1D in leaf mitochondria. May mediate dephosphorylation of CRT1 and promote the degradation of unfolded proteins in endoplasmic reticulum (ER). Involved in the regulation of flowering time by repressing FLC, the main flowering repressor gene. The protein is Serine/threonine protein phosphatase 2A 59 kDa regulatory subunit B' gamma isoform (B'GAMMA) of Arabidopsis thaliana (Mouse-ear cress).